The chain runs to 189 residues: Elongation factor P (189 aa).

Belongs to the elongation factor P family.

The protein localises to the cytoplasm. It participates in protein biosynthesis; polypeptide chain elongation. Its function is as follows. Involved in peptide bond synthesis. Stimulates efficient translation and peptide-bond synthesis on native or reconstituted 70S ribosomes in vitro. Probably functions indirectly by altering the affinity of the ribosome for aminoacyl-tRNA, thus increasing their reactivity as acceptors for peptidyl transferase. This Onion yellows phytoplasma (strain OY-M) protein is Elongation factor P.